The chain runs to 498 residues: ATP synthase subunit beta, chloroplastic (498 aa).

An ATP-binding site is contributed by 172-179 (GGAGVGKT).

Belongs to the ATPase alpha/beta chains family. In terms of assembly, F-type ATPases have 2 components, CF(1) - the catalytic core - and CF(0) - the membrane proton channel. CF(1) has five subunits: alpha(3), beta(3), gamma(1), delta(1), epsilon(1). CF(0) has four main subunits: a(1), b(1), b'(1) and c(9-12).

It is found in the plastid. The protein localises to the chloroplast thylakoid membrane. It carries out the reaction ATP + H2O + 4 H(+)(in) = ADP + phosphate + 5 H(+)(out). Its function is as follows. Produces ATP from ADP in the presence of a proton gradient across the membrane. The catalytic sites are hosted primarily by the beta subunits. In Trochodendron aralioides (Wheel tree), this protein is ATP synthase subunit beta, chloroplastic.